The primary structure comprises 957 residues: Glycine dehydrogenase (decarboxylating) (957 aa).

K702 bears the N6-(pyridoxal phosphate)lysine mark.

Belongs to the GcvP family. The glycine cleavage system is composed of four proteins: P, T, L and H. Pyridoxal 5'-phosphate serves as cofactor.

The enzyme catalyses N(6)-[(R)-lipoyl]-L-lysyl-[glycine-cleavage complex H protein] + glycine + H(+) = N(6)-[(R)-S(8)-aminomethyldihydrolipoyl]-L-lysyl-[glycine-cleavage complex H protein] + CO2. Functionally, the glycine cleavage system catalyzes the degradation of glycine. The P protein binds the alpha-amino group of glycine through its pyridoxal phosphate cofactor; CO(2) is released and the remaining methylamine moiety is then transferred to the lipoamide cofactor of the H protein. The protein is Glycine dehydrogenase (decarboxylating) of Bradyrhizobium sp. (strain ORS 278).